Consider the following 99-residue polypeptide: Large ribosomal subunit protein uL23 (99 aa).

It belongs to the universal ribosomal protein uL23 family. In terms of assembly, part of the 50S ribosomal subunit. Contacts protein L29, and trigger factor when it is bound to the ribosome.

Functionally, one of the early assembly proteins it binds 23S rRNA. One of the proteins that surrounds the polypeptide exit tunnel on the outside of the ribosome. Forms the main docking site for trigger factor binding to the ribosome. The polypeptide is Large ribosomal subunit protein uL23 (Shewanella woodyi (strain ATCC 51908 / MS32)).